The chain runs to 132 residues: Small ribosomal subunit protein uS8 (132 aa).

Belongs to the universal ribosomal protein uS8 family. Part of the 30S ribosomal subunit. Contacts proteins S5 and S12.

In terms of biological role, one of the primary rRNA binding proteins, it binds directly to 16S rRNA central domain where it helps coordinate assembly of the platform of the 30S subunit. In Rhodospirillum rubrum (strain ATCC 11170 / ATH 1.1.1 / DSM 467 / LMG 4362 / NCIMB 8255 / S1), this protein is Small ribosomal subunit protein uS8.